A 366-amino-acid polypeptide reads, in one-letter code: Cobalt-precorrin-5B C(1)-methyltransferase (366 aa).

Belongs to the CbiD family.

The enzyme catalyses Co-precorrin-5B + S-adenosyl-L-methionine = Co-precorrin-6A + S-adenosyl-L-homocysteine. Its pathway is cofactor biosynthesis; adenosylcobalamin biosynthesis; cob(II)yrinate a,c-diamide from sirohydrochlorin (anaerobic route): step 6/10. In terms of biological role, catalyzes the methylation of C-1 in cobalt-precorrin-5B to form cobalt-precorrin-6A. This is Cobalt-precorrin-5B C(1)-methyltransferase from Hahella chejuensis (strain KCTC 2396).